Reading from the N-terminus, the 369-residue chain is MDLHRTPLHDLCVTTGGRMVPFAGWEMPVQFSGLVAEHTAVRQRVGLFDISHMGVLRIEGSNPKDALQTLVPTDLHRIGPGQACYSVLLNESGGIRDDLIVYDLGQTNSDQGEASLIVVINAACAAADTAWISEQLTPQGLKVTDEKGDGILLALQGPEALARMEQLSGVDLHALPRFAHRMLDLTGLSRPVFCARTGYTGEDGVELLLAREDGRNLWNRLVADGVTPCGLGARDTLRLEAAMHLYGQDMDADTTPFEAGLGWLVHLEMPSTFTGRAALERAADSGPSRRLVGLKLKGRAIARHGYPVIHNGEQAGAITSGSWSPTLQEAIALAYVPTALAKVGQELGVEIRGQVQAATVVRRPFYRHP.

The protein belongs to the GcvT family. The glycine cleavage system is composed of four proteins: P, T, L and H.

It carries out the reaction N(6)-[(R)-S(8)-aminomethyldihydrolipoyl]-L-lysyl-[protein] + (6S)-5,6,7,8-tetrahydrofolate = N(6)-[(R)-dihydrolipoyl]-L-lysyl-[protein] + (6R)-5,10-methylene-5,6,7,8-tetrahydrofolate + NH4(+). Its function is as follows. The glycine cleavage system catalyzes the degradation of glycine. This chain is Aminomethyltransferase, found in Synechococcus sp. (strain WH7803).